Consider the following 466-residue polypeptide: 3-isopropylmalate dehydratase large subunit (466 aa).

[4Fe-4S] cluster-binding residues include C347, C407, and C410.

This sequence belongs to the aconitase/IPM isomerase family. LeuC type 1 subfamily. Heterodimer of LeuC and LeuD. [4Fe-4S] cluster serves as cofactor.

The enzyme catalyses (2R,3S)-3-isopropylmalate = (2S)-2-isopropylmalate. It functions in the pathway amino-acid biosynthesis; L-leucine biosynthesis; L-leucine from 3-methyl-2-oxobutanoate: step 2/4. Catalyzes the isomerization between 2-isopropylmalate and 3-isopropylmalate, via the formation of 2-isopropylmaleate. In Pseudoalteromonas translucida (strain TAC 125), this protein is 3-isopropylmalate dehydratase large subunit.